A 186-amino-acid polypeptide reads, in one-letter code: Calcium load-activated calcium channel homolog (186 aa).

At 1-6 (MLGDCL) the chain is on the cytoplasmic side. The helical transmembrane segment at 7–27 (LIIAIAFGTALAGEGITWLLV) threads the bilayer. The Lumenal segment spans residues 28–87 (YRSDHYKRLKADMDKKTKKLEKKKQEVGDTNDKNIKRKLEREEERLKATNRDMSMFKMKS). Residues 30-86 (SDHYKRLKADMDKKTKKLEKKKQEVGDTNDKNIKRKLEREEERLKATNRDMSMFKMK) adopt a coiled-coil conformation. The helical transmembrane segment at 88 to 108 (MFAIGLAFTALLSTFNSIFEG) threads the bilayer. Topologically, residues 109–134 (RVVAKLPFYPIGFIQGLSHRNLIGED) are cytoplasmic. Residues 135–151 (MTDCSFIFLYILCTMTV) constitute an intramembrane region (pore-forming). Residues 152–186 (RQNLQKILGFAPSRAMARQQSSPWAPPNSQMNYLR) lie on the Cytoplasmic side of the membrane.

It belongs to the TMCO1 family. As to quaternary structure, homodimer and homotetramer.

The protein localises to the endoplasmic reticulum membrane. Calcium-selective channel required to prevent calcium stores from overfilling. In Caenorhabditis elegans, this protein is Calcium load-activated calcium channel homolog.